The sequence spans 83 residues: MSSGGLLLLLGLLTLWEVLTPVSSKDRPRFCELPADPGPCNGLFQAFYYNPVQRTCLKFRYGGCKGNPNTFKTIEECKRTCAA.

A signal peptide spans 1–24; the sequence is MSSGGLLLLLGLLTLWEVLTPVSS. The region spanning 31-81 is the BPTI/Kunitz inhibitor domain; it reads CELPADPGPCNGLFQAFYYNPVQRTCLKFRYGGCKGNPNTFKTIEECKRTC. 3 disulfide bridges follow: Cys-31/Cys-81, Cys-40/Cys-64, and Cys-56/Cys-77.

This sequence belongs to the venom Kunitz-type family. As to expression, expressed by the venom gland.

It localises to the secreted. Functionally, serine protease inhibitor homolog that only shows inhibitory activity against MMP2. This Pseudechis australis (Mulga snake) protein is Kunitz-type serine protease inhibitor homolog mulgin-1.